The sequence spans 202 residues: Ribosome biogenesis regulatory protein homolog (202 aa).

The segment at 82 to 103 (TLPPPTTPLPREKPVPQPKPET) is disordered.

This sequence belongs to the RRS1 family. Component of a hexameric 5S RNP precursor complex, composed of 5S RNA, RRS1, RPF2, RPL5, RPL11 and SYO1; this complex acts as a precursor for ribosome assembly.

Its subcellular location is the nucleus. In terms of biological role, involved in ribosomal large subunit assembly. The chain is Ribosome biogenesis regulatory protein homolog from Chaetomium thermophilum (strain DSM 1495 / CBS 144.50 / IMI 039719) (Thermochaetoides thermophila).